The following is a 522-amino-acid chain: Target of rapamycin complex 2 subunit MAPKAP1 (522 aa).

Ala2 bears the N-acetylalanine mark. Positions 2 to 184 (AFLDNPTIIL…KKIDVYLPLH (183 aa)) are interaction with MAP3K2. An interaction with NBN region spans residues 2-267 (AFLDNPTIIL…GFSTLALVEK (266 aa)). Position 86 is a phosphothreonine (Thr86). Residues Ser128, Ser186, Ser315, and Ser356 each carry the phosphoserine modification. A CRIM domain is found at 139–267 (QSILSVRLEQ…GFSTLALVEK (129 aa)). The SIN1-type RBD stretch occupies residues 279–353 (LFVRINAAHG…QSAWEFCLVR (75 aa)). In terms of domain architecture, SIN1-type PH spans 382–487 (HYKSFKVSMI…IVLKVNYILE (106 aa)). An a 1,2-diacyl-sn-glycero-3-phospho-(1D-myo-inositol-3,4,5-trisphosphate)-binding site is contributed by Arg393. Thr398 is modified (phosphothreonine). The a 1,2-diacyl-sn-glycero-3-phospho-(1D-myo-inositol-3,4,5-trisphosphate) site is built by Lys428 and Lys464. The interaction with ATF2 stretch occupies residues 468-522 (FESDAATVNEIVLKVNYILESRASTARADYFAQKQRKLNRRTSFSFQKEKKSGQQ). Residue Ser510 is modified to Phosphoserine.

It belongs to the SIN1 family. Component of the mechanistic target of rapamycin complex 2 (mTORC2), consisting in two heterotretramers composed of MTOR, MLST8, RICTOR and MAPKAP1/SIN1. The mTORC2 core complex associates with PRR5/PROTOR1 and/or PRR5L/PROTOR2. Contrary to mTORC1, mTORC2 does not bind to and is not sensitive to FKBP12-rapamycin. Interacts with MAP3K2. Interacts with ATF2. Interacts with MAPK8. Interacts with GTP-bound HRAS and KRAS; inhibiting their activity. Interacts with IFNAR2. In terms of processing, phosphorylation at Ser-128 by PKC promotes relocalization to the perinuclear region, where the mTORC2 complex specifically mediates phosphorylation of SGK1. Phosphorylated at Thr-86 by AKT1 or RPS6KB1 in the presence of growth factors; the effect of this phosphorylation is however unclear. According to two studies, phosphorylation at Thr-86 by AKT1 is part of a positive feedback loop that increases mTORC2 activation. According to another study, phosphorylation at Thr-86 and Thr-398 by RPS6KB1 promotes dissociation from the mTORC2 complex, leading to inhibit mTORC2 signaling.

The protein localises to the cell membrane. The protein resides in the endoplasmic reticulum membrane. It is found in the early endosome membrane. Its subcellular location is the late endosome membrane. It localises to the lysosome membrane. The protein localises to the golgi apparatus membrane. The protein resides in the mitochondrion outer membrane. It is found in the cytoplasm. Its subcellular location is the perinuclear region. It localises to the nucleus. Its activity is regulated as follows. Phosphatidylinositol 3,4,5-trisphosphate (PI(3,4,5)P3) promotes MTOR activation by relieving MAPKAP1/SIN1-mediated inhibition of MTOR that takes place in absence of PI(3,4,5)P3. Functionally, component of the mechanistic target of rapamycin complex 2 (mTORC2), which transduces signals from growth factors to pathways involved in proliferation, cytoskeletal organization, lipogenesis and anabolic output. In response to growth factors, mTORC2 phosphorylates and activates AGC protein kinase family members, including AKT (AKT1, AKT2 and AKT3), PKC (PRKCA, PRKCB and PRKCE) and SGK1. In contrast to mTORC1, mTORC2 is nutrient-insensitive. Within the mTORC2 complex, MAPKAP1/SIN1 acts as a substrate adapter which recognizes and binds AGC protein kinase family members for phosphorylation by MTOR. mTORC2 plays a critical role in AKT1 activation by mediating phosphorylation of different sites depending on the context, such as 'Thr-450', 'Ser-473', 'Ser-477' or 'Thr-479', facilitating the phosphorylation of the activation loop of AKT1 on 'Thr-308' by PDPK1/PDK1 which is a prerequisite for full activation. mTORC2 catalyzes the phosphorylation of SGK1 at 'Ser-422' and of PRKCA on 'Ser-657'. The mTORC2 complex also phosphorylates various proteins involved in insulin signaling, such as FBXW8 and IGF2BP1. mTORC2 acts upstream of Rho GTPases to regulate the actin cytoskeleton, probably by activating one or more Rho-type guanine nucleotide exchange factors. mTORC2 promotes the serum-induced formation of stress-fibers or F-actin. MAPKAP1 inhibits MAP3K2 by preventing its dimerization and autophosphorylation. Inhibits HRAS and KRAS independently of mTORC2 complex. Enhances osmotic stress-induced phosphorylation of ATF2 and ATF2-mediated transcription. Involved in ciliogenesis, regulates cilia length through its interaction with CCDC28B independently of mTORC2 complex. This chain is Target of rapamycin complex 2 subunit MAPKAP1 (MAPKAP1), found in Bos taurus (Bovine).